The primary structure comprises 874 residues: Alanine--tRNA ligase (874 aa).

Residues His562, His566, Cys664, and His668 each contribute to the Zn(2+) site.

This sequence belongs to the class-II aminoacyl-tRNA synthetase family. Requires Zn(2+) as cofactor.

Its subcellular location is the cytoplasm. It carries out the reaction tRNA(Ala) + L-alanine + ATP = L-alanyl-tRNA(Ala) + AMP + diphosphate. In terms of biological role, catalyzes the attachment of alanine to tRNA(Ala) in a two-step reaction: alanine is first activated by ATP to form Ala-AMP and then transferred to the acceptor end of tRNA(Ala). Also edits incorrectly charged Ser-tRNA(Ala) and Gly-tRNA(Ala) via its editing domain. The protein is Alanine--tRNA ligase of Neisseria meningitidis serogroup A / serotype 4A (strain DSM 15465 / Z2491).